A 364-amino-acid polypeptide reads, in one-letter code: Geissoschizine synthase (364 aa).

The region spanning 24–343 (GILHPIKFSR…DYLSTAMERI (320 aa)) is the Enoyl reductase (ER) domain. Residue Cys-51 coordinates Zn(2+). Asn-52 serves as a coordination point for NADP(+). The Zn(2+) site is built by His-73, Glu-74, Cys-104, Cys-107, Cys-110, Cys-118, and Cys-168. The NADP(+) site is built by Leu-194, Gly-196, Leu-197, Ser-216, Thr-217, Ser-218, Lys-221, Arg-261, Val-280, Ala-282, Ser-304, Thr-306, and Arg-351.

It belongs to the zinc-containing alcohol dehydrogenase family. Class-III subfamily. In terms of assembly, homodimer. The cofactor is Zn(2+).

It catalyses the reaction (19E)-geissoschizine + NADP(+) = 4,21-dehydrogeissoschizine + NADPH. The catalysed reaction is (19E)-geissoschizine + NADPH + H(+) = (16R,19E)-isositsirikine + NADP(+). It carries out the reaction (19E)-geissoschizine + NADPH + H(+) = (16R,19Z)-isositsirikine + NADP(+). The protein operates within alkaloid biosynthesis. An alcohol dehydrogenase involved in the biosynthesis of seco-iridoid and derivatives monoterpenoid indole alkaloids natural products. Catalyzes the production of geissoschizine and its conversion to (16R)-E-isositsirikine and (16R)-Z-isositsirikine. The polypeptide is Geissoschizine synthase (Alstonia scholaris (Dogbane)).